The sequence spans 88 residues: Small ribosomal subunit protein bS16 (88 aa).

The protein belongs to the bacterial ribosomal protein bS16 family.

This Leptospira borgpetersenii serovar Hardjo-bovis (strain L550) protein is Small ribosomal subunit protein bS16.